A 424-amino-acid polypeptide reads, in one-letter code: Probable biofilm formation methyltransferase WspC (424 aa).

The 263-residue stretch at 1–263 folds into the CheR-type methyltransferase domain; it reads MNEQRFFRFL…IAQSFAYVRH (263 aa). Residues Thr-68, Arg-72, Glu-109, Asp-133, 187–188, and 206–207 contribute to the S-adenosyl-L-methionine site; these read NV and RN. The stretch at 355–388 is one TPR repeat; it reads AQVYYWLGLLSDTEGDAQQALSHYRKALYLEPQH.

As to quaternary structure, monomer. The TPR repeat does not mediate self-association.

In terms of biological role, involved in biofilm formation. The polypeptide is Probable biofilm formation methyltransferase WspC (wspC) (Pseudomonas putida (strain ATCC 47054 / DSM 6125 / CFBP 8728 / NCIMB 11950 / KT2440)).